Reading from the N-terminus, the 1427-residue chain is Double-stranded DNA deaminase toxin A (1427 aa).

Transmembrane regions (helical) follow at residues 16–36 (ALAG…AVAF) and 43–63 (FGVA…LLSI). YD repeat units follow at residues 469–501 (RVVE…DGRT), 548–584 (YDDA…GPDG), 720–747 (NARG…GRLR), and 977–1008 (YDGA…ISRA). The segment at 1264-1427 (IGLNGGANVY…SPKSPTKGGC (164 aa)) is C-terminal effector domain, has cytidine deaminase activity. Zn(2+) contacts are provided by histidine 1345, cysteine 1373, and cysteine 1376. The disordered stretch occupies residues 1402–1427 (KRGATGETKVFTGNSNSPKSPTKGGC). The segment covering 1412-1421 (FTGNSNSPKS) has biased composition (polar residues).

The protein belongs to the RHS/WapA nuclease family. In terms of assembly, the toxic domain forms a 1:1 complex with the DddI immunity protein.

It is found in the membrane. The enzyme catalyses a 2'-deoxycytidine in double-stranded DNA + H2O + H(+) = a 2'-deoxyuridine in double-stranded DNA + NH4(+). Functionally, toxic component of a toxin-immunity protein module, which functions as a cellular contact-dependent growth inhibition (CDI) system. CDI modules allow bacteria to communicate with and inhibit the growth of closely related neighboring bacteria in a contact-dependent fashion. Bacteria that have this module inhibit or kill bacteria without it, giving them a growth advantage. Probably specifically inhibited by cognate immunity protein DddI. The C-terminal 163 residue fragment has double-stranded DNA cytidine deaminase activity; it does not deaminate ssDNA, ssRNA or dsRNA. Leads to C:G to T:A conversions in deaminated DNA. Preferentially deaminates 5'-TC-3' substrates. The chain is Double-stranded DNA deaminase toxin A from Burkholderia cenocepacia (strain H111).